Here is a 329-residue protein sequence, read N- to C-terminus: 4-hydroxythreonine-4-phosphate dehydrogenase (329 aa).

Residues His-136 and Thr-137 each coordinate substrate. His-166, His-211, and His-266 together coordinate a divalent metal cation. Substrate contacts are provided by Lys-274, Asn-283, and Arg-292.

This sequence belongs to the PdxA family. Homodimer. The cofactor is Zn(2+). Mg(2+) is required as a cofactor. Requires Co(2+) as cofactor.

The protein resides in the cytoplasm. The enzyme catalyses 4-(phosphooxy)-L-threonine + NAD(+) = 3-amino-2-oxopropyl phosphate + CO2 + NADH. Its pathway is cofactor biosynthesis; pyridoxine 5'-phosphate biosynthesis; pyridoxine 5'-phosphate from D-erythrose 4-phosphate: step 4/5. Its function is as follows. Catalyzes the NAD(P)-dependent oxidation of 4-(phosphooxy)-L-threonine (HTP) into 2-amino-3-oxo-4-(phosphooxy)butyric acid which spontaneously decarboxylates to form 3-amino-2-oxopropyl phosphate (AHAP). The sequence is that of 4-hydroxythreonine-4-phosphate dehydrogenase from Escherichia coli O17:K52:H18 (strain UMN026 / ExPEC).